A 235-amino-acid polypeptide reads, in one-letter code: MAELVVALDFPAADVAVDMAGRLRGTAPWMKVGLELFCAAGPDVVRAVADLGFRVFLDLKFHDIPNTVRGAVRSAVRSGADMVNIHLMGGERMARAAVEGLHEGAQTTGSVPLLFGVTVLTSTAQGELPGISTDIGEYAASLAASGAAWGLNGVVCSGYEVESIKKRCGASFLCLTPGIRPGGGAGGDDQRRVMTPAQAVSAGSDYLVVGRPVTGAADPAAAARAIMAEMAAVRR.

Substrate-binding positions include Asp-9, Lys-31, 58 to 67 (DLKFHDIPNT), Thr-121, Arg-180, Gln-190, Gly-210, and Arg-211. Residue Lys-60 is the Proton donor of the active site.

This sequence belongs to the OMP decarboxylase family. Type 1 subfamily. In terms of assembly, homodimer.

It catalyses the reaction orotidine 5'-phosphate + H(+) = UMP + CO2. The protein operates within pyrimidine metabolism; UMP biosynthesis via de novo pathway; UMP from orotate: step 2/2. In terms of biological role, catalyzes the decarboxylation of orotidine 5'-monophosphate (OMP) to uridine 5'-monophosphate (UMP). This chain is Orotidine 5'-phosphate decarboxylase, found in Nitratidesulfovibrio vulgaris (strain ATCC 29579 / DSM 644 / CCUG 34227 / NCIMB 8303 / VKM B-1760 / Hildenborough) (Desulfovibrio vulgaris).